An 81-amino-acid chain; its full sequence is Small ribosomal subunit protein bS16 (81 aa).

The protein belongs to the bacterial ribosomal protein bS16 family.

The sequence is that of Small ribosomal subunit protein bS16 from Acetivibrio thermocellus (strain ATCC 27405 / DSM 1237 / JCM 9322 / NBRC 103400 / NCIMB 10682 / NRRL B-4536 / VPI 7372) (Clostridium thermocellum).